The primary structure comprises 143 residues: Flagellar assembly factor FliW (143 aa).

This sequence belongs to the FliW family. Interacts with translational regulator CsrA and flagellin(s).

The protein resides in the cytoplasm. Acts as an anti-CsrA protein, binds CsrA and prevents it from repressing translation of its target genes, one of which is flagellin. Binds to flagellin and participates in the assembly of the flagellum. This Clostridium botulinum (strain ATCC 19397 / Type A) protein is Flagellar assembly factor FliW.